The primary structure comprises 230 residues: Cytidylate kinase (230 aa).

Residue 12 to 20 coordinates ATP; the sequence is GPSGAGKGT.

This sequence belongs to the cytidylate kinase family. Type 1 subfamily.

The protein localises to the cytoplasm. The catalysed reaction is CMP + ATP = CDP + ADP. The enzyme catalyses dCMP + ATP = dCDP + ADP. The polypeptide is Cytidylate kinase (Yersinia enterocolitica serotype O:8 / biotype 1B (strain NCTC 13174 / 8081)).